Consider the following 130-residue polypeptide: Small ribosomal subunit protein uS9 (130 aa).

A disordered region spans residues 102–130; the sequence is GFLTRDPRMKERKKYGLKKARRAPQFSKR. Residues 111–130 are compositionally biased toward basic residues; that stretch reads KERKKYGLKKARRAPQFSKR.

It belongs to the universal ribosomal protein uS9 family.

The protein is Small ribosomal subunit protein uS9 of Clostridium novyi (strain NT).